A 252-amino-acid polypeptide reads, in one-letter code: Auxin-induced in root cultures protein 12 (252 aa).

The first 25 residues, 1–25, serve as a signal peptide directing secretion; the sequence is MASSSSSLLILAVACFVSLISPAIS. The 117-residue stretch at 49–165 folds into the DOMON domain; it reads LNSYLHYTYN…DSVNQVWQIG (117 aa). N-linked (GlcNAc...) asparagine glycosylation is found at N58 and N61. M91 is a binding site for heme. N-linked (GlcNAc...) asparagine glycans are attached at residues N114 and N167. A heme-binding site is contributed by H176. A disordered region spans residues 193–224; sequence EDAAPGSAPSPGSAPAPGTSGSTTPGTAAGGP. Residues 195-219 are compositionally biased toward low complexity; the sequence is AAPGSAPSPGSAPAPGTSGSTTPGT. N226 carries the GPI-anchor amidated asparagine lipid modification. A propeptide spans 227–252 (removed in mature form); that stretch reads AGSLTRNVNFGVNLGILVLLGSIFIF.

Heme is required as a cofactor.

Its subcellular location is the cell membrane. Its function is as follows. One-heme-containing cytochrome. This chain is Auxin-induced in root cultures protein 12 (AIR12), found in Arabidopsis thaliana (Mouse-ear cress).